Reading from the N-terminus, the 116-residue chain is MKYSGYHLVIDLFGCNFDQLENTEYIIEMLKKLARALDTKIVAKAFHKFHPQGFSGALIISESHITIHTWPEDAYIGIDIFTCSKCFDSRKIVAYLKENLIFKKVEIKEILRGKID.

Ser-63 acts as the Schiff-base intermediate with substrate; via pyruvic acid in catalysis. At Ser-63 the chain carries Pyruvic acid (Ser); by autocatalysis. Catalysis depends on His-68, which acts as the Proton acceptor; for processing activity. Cys-83 functions as the Proton donor; for catalytic activity in the catalytic mechanism.

It belongs to the prokaryotic AdoMetDC family. Type 1 subfamily. Heterotetramer of two alpha and two beta chains arranged as a dimer of alpha/beta heterodimers. Pyruvate serves as cofactor. In terms of processing, is synthesized initially as an inactive proenzyme. Formation of the active enzyme involves a self-maturation process in which the active site pyruvoyl group is generated from an internal serine residue via an autocatalytic post-translational modification. Two non-identical subunits are generated from the proenzyme in this reaction, and the pyruvate is formed at the N-terminus of the alpha chain, which is derived from the carboxyl end of the proenzyme. The post-translation cleavage follows an unusual pathway, termed non-hydrolytic serinolysis, in which the side chain hydroxyl group of the serine supplies its oxygen atom to form the C-terminus of the beta chain, while the remainder of the serine residue undergoes an oxidative deamination to produce ammonia and the pyruvoyl group blocking the N-terminus of the alpha chain.

The enzyme catalyses S-adenosyl-L-methionine + H(+) = S-adenosyl 3-(methylsulfanyl)propylamine + CO2. The protein operates within amine and polyamine biosynthesis; S-adenosylmethioninamine biosynthesis; S-adenosylmethioninamine from S-adenosyl-L-methionine: step 1/1. Catalyzes the decarboxylation of S-adenosylmethionine to S-adenosylmethioninamine (dcAdoMet), the propylamine donor required for the synthesis of the polyamines spermine and spermidine from the diamine putrescine. The sequence is that of S-adenosylmethionine decarboxylase proenzyme from Clostridium botulinum (strain Okra / Type B1).